The primary structure comprises 89 residues: Small ribosomal subunit protein uS15 (89 aa).

Belongs to the universal ribosomal protein uS15 family. Part of the 30S ribosomal subunit. Forms a bridge to the 50S subunit in the 70S ribosome, contacting the 23S rRNA.

Its function is as follows. One of the primary rRNA binding proteins, it binds directly to 16S rRNA where it helps nucleate assembly of the platform of the 30S subunit by binding and bridging several RNA helices of the 16S rRNA. Functionally, forms an intersubunit bridge (bridge B4) with the 23S rRNA of the 50S subunit in the ribosome. The polypeptide is Small ribosomal subunit protein uS15 (Desulfatibacillum aliphaticivorans).